The sequence spans 160 residues: MCRFLISTPFSRRRGERKAEAGRMARSVSYVSAAKLLAMARSNPRVAIIDVRDEERSYQAHIGGSHHFSSRSFAARLPELARATGDKDTVVFHCALSKVRGPSCAKMFSDYLSETKEESGTKNIMVLERGFNGWELSGQPVCRCTDAPCKGTCSPEEPEL.

In terms of domain architecture, Rhodanese spans 42-143 (SNPRVAIIDV…WELSGQPVCR (102 aa)). The Cysteine persulfide intermediate role is filled by cysteine 94.

The catalysed reaction is [glutaredoxin]-dithiol + arsenate + glutathione + H(+) = glutathionyl-S-S-[glutaredoxin] + arsenite + H2O. Possesses arsenate reductase activity in vitro. Catalyzes the reduction of arsenate [As(V)] to arsenite [As(III)]. May play a role in arsenic retention in roots. Functionally, possesses phosphatase activity towards p-nitrophenyl phosphate in vitro. The protein is Arsenate reductase 2.1 (ACR2.1) of Oryza sativa subsp. japonica (Rice).